Reading from the N-terminus, the 130-residue chain is Hypocretin neuropeptide precursor (130 aa).

The signal sequence occupies residues 1–32 (MNPPSTKVPWAAVTLLLLLLLPPALLSPGAAA). Position 33 is a pyrrolidone carboxylic acid (Gln33). Cystine bridges form between Cys38-Cys44 and Cys39-Cys46. Leu65 carries the leucine amide modification. Methionine amide is present on Met96. Residues 97-130 (GRRAGAEPAPRPCPGRRCPVVAVPSAAPGGRSGV) constitute a propeptide, removed in mature form.

Belongs to the orexin family. Post-translationally, specific enzymatic cleavages at paired basic residues yield the different active peptides.

It localises to the rough endoplasmic reticulum. It is found in the cytoplasmic vesicle. The protein localises to the synapse. Functionally, neuropeptides that play a significant role in the regulation of food intake and sleep-wakefulness, possibly by coordinating the complex behavioral and physiologic responses of these complementary homeostatic functions. A broader role in the homeostatic regulation of energy metabolism, autonomic function, hormonal balance and the regulation of body fluids, is also suggested. In terms of biological role, binds to orexin receptors HCRTR1/OX1R and HCRTR2/OX2R with a high affinity. Stimulates food intake. Modulates pituitary luteinizing hormone secretion in an ovarian steroid-dependent manner. Its function is as follows. Binds to orexin receptor HCRTR2/OX2R only. Stimulates food intake. Modulates pituitary luteinizing hormone secretion in an ovarian steroid-dependent manner. The sequence is that of Hypocretin neuropeptide precursor (HCRT) from Canis lupus familiaris (Dog).